The following is a 193-amino-acid chain: Leucyl/phenylalanyl-tRNA--protein transferase (193 aa).

It belongs to the L/F-transferase family.

The protein localises to the cytoplasm. The catalysed reaction is N-terminal L-lysyl-[protein] + L-leucyl-tRNA(Leu) = N-terminal L-leucyl-L-lysyl-[protein] + tRNA(Leu) + H(+). It carries out the reaction N-terminal L-arginyl-[protein] + L-leucyl-tRNA(Leu) = N-terminal L-leucyl-L-arginyl-[protein] + tRNA(Leu) + H(+). The enzyme catalyses L-phenylalanyl-tRNA(Phe) + an N-terminal L-alpha-aminoacyl-[protein] = an N-terminal L-phenylalanyl-L-alpha-aminoacyl-[protein] + tRNA(Phe). Its function is as follows. Functions in the N-end rule pathway of protein degradation where it conjugates Leu, Phe and, less efficiently, Met from aminoacyl-tRNAs to the N-termini of proteins containing an N-terminal arginine or lysine. The polypeptide is Leucyl/phenylalanyl-tRNA--protein transferase (Gloeobacter violaceus (strain ATCC 29082 / PCC 7421)).